The chain runs to 62 residues: Protein sigN176 (62 aa).

This Dictyostelium discoideum (Social amoeba) protein is Protein sigN176.